Consider the following 32-residue polypeptide: C-reactive protein (32 aa).

One can recognise a Pentraxin (PTX) domain in the interval 2-32; the sequence is VIKTLVFQSESNNSFVELIPMKPLNLRAFXL.

This sequence belongs to the pentraxin family. As to quaternary structure, homopentamer. Pentraxin (or pentaxin) have a discoid arrangement of 5 non-covalently bound subunits. Post-translationally, glycosylated.

It localises to the secreted. Displays several functions associated with host defense: it promotes agglutination, bacterial capsular swelling, phagocytosis, and complement fixation through its calcium-dependent binding to phosphorylcholine. This chain is C-reactive protein, found in Pleuronectes platessa (European plaice).